Here is a 535-residue protein sequence, read N- to C-terminus: Cytochrome P450 monooxygenase claP (535 aa).

2 helical membrane passes run 7 to 27 (IGTL…KLVG) and 225 to 245 (YFSM…KLPT). A heme-binding site is contributed by Cys472.

It belongs to the cytochrome P450 family. Requires heme as cofactor.

The protein resides in the membrane. It functions in the pathway secondary metabolite biosynthesis; terpenoid biosynthesis. Its function is as follows. Cytochrome P450 monooxygenase; part of the gene cluster that mediates the biosynthesis of clavilactone A, a meroterpenoid that features a unique benzo-fused ten-membered carbocyclic ring unit with an alpha,beta-epoxy-gamma-lactone moiety, forming an intriguing 10/5/3 tricyclic nested skeleton. Cytochrome P450 monooxygenases claO, claP, claQ, claU, and claW are close orthologs, suggesting that a redundant function or pseudogenes are present in the cla cluster. These monoxygenases are not involved in clavilactone A biosynthesis nor its modification. ClaR, ClaS and ClaT are sufficient to produce clavilactone A. The biosynthesis begins with the prenyltransferase claS that transfers geranyl pyrophosphate (GPP) to hydroquinone to produces geranylhydroquinone. The cytochrome P450 monooxygenase claR then catalyzes the diradical coupling reaction between the intramolecular hydroquinone and allyl moieties to form the benzo-fused ten-membered carbocyclic ring unit of wigantol. Finally the cytochrome P450 monooxygenase claT exquisitely and stereoselectively assembles the alpha,beta-epoxy-gamma-lactone moiety, producing clavilactone A via arnebinol A. This Ampulloclitocybe clavipes (Club foot) protein is Cytochrome P450 monooxygenase claP.